The sequence spans 429 residues: Trigger factor (429 aa).

One can recognise a PPIase FKBP-type domain in the interval 162-247 (DDTVDLAFEG…INAIKKLRQP (86 aa)).

The protein belongs to the FKBP-type PPIase family. Tig subfamily.

It is found in the cytoplasm. The catalysed reaction is [protein]-peptidylproline (omega=180) = [protein]-peptidylproline (omega=0). In terms of biological role, involved in protein export. Acts as a chaperone by maintaining the newly synthesized protein in an open conformation. Functions as a peptidyl-prolyl cis-trans isomerase. The polypeptide is Trigger factor (Fusobacterium nucleatum subsp. nucleatum (strain ATCC 25586 / DSM 15643 / BCRC 10681 / CIP 101130 / JCM 8532 / KCTC 2640 / LMG 13131 / VPI 4355)).